Reading from the N-terminus, the 179-residue chain is Insulin-like growth factor 2 (179 aa).

The first 24 residues, 1-24, serve as a signal peptide directing secretion; that stretch reads MGITAGKSVLVLLAFLAFASCCYA. Residues 25–52 are b; the sequence is AYRPSETLCGGELVDTLQFVCGDRGFYF. 3 cysteine pairs are disulfide-bonded: Cys33–Cys71, Cys45–Cys84, and Cys70–Cys75. A c region spans residues 53–64; that stretch reads SRPSSRINRRSR. The tract at residues 65–85 is a; it reads GIVEECCFRSCDLALLETYCA. A d region spans residues 86–91; that stretch reads TPAKSE. Residues 92–179 constitute a propeptide, e peptide; it reads RDVSASTTVL…GGASSKASSD (88 aa). The O-linked (GalNAc...) threonine glycan is linked to Thr106. O-linked (GalNAc...) serine glycosylation occurs at Ser154. The tract at residues 160 to 179 is disordered; sequence ALPTQDPATHGGASSKASSD. O-linked (GalNAc...) threonine glycosylation occurs at Thr163.

Belongs to the insulin family. Interacts with MYORG; this interaction is required for IGF2 secretion. Interacts with integrins ITGAV:ITGB3 and ITGA6:ITGB4; integrin-binding is required for IGF2 signaling. Interacts with IGFBP2. In terms of processing, proteolytically processed by PCSK4, proIGF2 is cleaved at Arg-128 and Arg-92 to generate big-IGF2 and mature IGF2.

It localises to the secreted. Its function is as follows. The insulin-like growth factors possess growth-promoting activity. Major fetal growth hormone in mammals. Plays a key role in regulating fetoplacental development. IGF2 is influenced by placental lactogen. Also involved in tissue differentiation. In adults, involved in glucose metabolism in adipose tissue, skeletal muscle and liver. Acts as a ligand for integrin which is required for IGF2 signaling. Positively regulates myogenic transcription factor MYOD1 function by facilitating the recruitment of transcriptional coactivators, thereby controlling muscle terminal differentiation. Inhibits myoblast differentiation and modulates metabolism via increasing the mitochondrial respiration rate. Functionally, preptin undergoes glucose-mediated co-secretion with insulin, and acts as a physiological amplifier of glucose-mediated insulin secretion. Exhibits osteogenic properties by increasing osteoblast mitogenic activity through phosphoactivation of MAPK1 and MAPK3. The sequence is that of Insulin-like growth factor 2 from Bos taurus (Bovine).